A 362-amino-acid polypeptide reads, in one-letter code: Homeobox protein Nkx-2.3 (362 aa).

Disordered stretches follow at residues 126 to 149 (EAAG…RKPR) and 203 to 222 (QRQD…PPRR). The segment covering 132–141 (KTSEDGERPK) has biased composition (basic and acidic residues). Residues 145–204 (RRKPRVLFSQAQVFELERRFKQQRYLSAPEREHLASSLKLTSTQVKIWFQNRRYKCKRQR) constitute a DNA-binding region (homeobox).

Belongs to the NK-2 homeobox family. As to expression, expressed in spleen and intestine. Also expressed in salivary gland and tongue.

It localises to the nucleus. Its function is as follows. Transcriptional regulator essential for normal development and functions of the small intestine and spleen. Activates directly MADCAM1 expression. Required for homing of lymphocytes in spleen and mucosa-associated lymphoid tissue. May have a role during pharyngeal organogenesis. The protein is Homeobox protein Nkx-2.3 (Nkx2-3) of Mus musculus (Mouse).